The sequence spans 450 residues: Probable glycine dehydrogenase (decarboxylating) subunit 1 (450 aa).

This sequence belongs to the GcvP family. N-terminal subunit subfamily. As to quaternary structure, the glycine cleavage system is composed of four proteins: P, T, L and H. In this organism, the P 'protein' is a heterodimer of two subunits.

The enzyme catalyses N(6)-[(R)-lipoyl]-L-lysyl-[glycine-cleavage complex H protein] + glycine + H(+) = N(6)-[(R)-S(8)-aminomethyldihydrolipoyl]-L-lysyl-[glycine-cleavage complex H protein] + CO2. The glycine cleavage system catalyzes the degradation of glycine. The P protein binds the alpha-amino group of glycine through its pyridoxal phosphate cofactor; CO(2) is released and the remaining methylamine moiety is then transferred to the lipoamide cofactor of the H protein. In Staphylococcus haemolyticus (strain JCSC1435), this protein is Probable glycine dehydrogenase (decarboxylating) subunit 1.